The sequence spans 263 residues: 5'-nucleotidase SurE (263 aa).

Aspartate 8, aspartate 9, serine 40, and asparagine 93 together coordinate a divalent metal cation.

This sequence belongs to the SurE nucleotidase family. A divalent metal cation is required as a cofactor.

It is found in the cytoplasm. The enzyme catalyses a ribonucleoside 5'-phosphate + H2O = a ribonucleoside + phosphate. In terms of biological role, nucleotidase that shows phosphatase activity on nucleoside 5'-monophosphates. The sequence is that of 5'-nucleotidase SurE from Caulobacter vibrioides (strain ATCC 19089 / CIP 103742 / CB 15) (Caulobacter crescentus).